A 494-amino-acid polypeptide reads, in one-letter code: Glycerol kinase (494 aa).

Threonine 12 is an ADP binding site. Threonine 12, threonine 13, and serine 14 together coordinate ATP. Threonine 12 serves as a coordination point for sn-glycerol 3-phosphate. Arginine 16 provides a ligand contact to ADP. Sn-glycerol 3-phosphate-binding residues include arginine 82, glutamate 83, tyrosine 135, and aspartate 244. Residues arginine 82, glutamate 83, tyrosine 135, aspartate 244, and glutamine 245 each contribute to the glycerol site. ADP contacts are provided by threonine 266 and glycine 309. The ATP site is built by threonine 266, glycine 309, glutamine 313, and glycine 409. 2 residues coordinate ADP: glycine 409 and asparagine 413.

It belongs to the FGGY kinase family.

It carries out the reaction glycerol + ATP = sn-glycerol 3-phosphate + ADP + H(+). Its pathway is polyol metabolism; glycerol degradation via glycerol kinase pathway; sn-glycerol 3-phosphate from glycerol: step 1/1. With respect to regulation, inhibited by fructose 1,6-bisphosphate (FBP). Functionally, key enzyme in the regulation of glycerol uptake and metabolism. Catalyzes the phosphorylation of glycerol to yield sn-glycerol 3-phosphate. The sequence is that of Glycerol kinase from Alteromonas mediterranea (strain DSM 17117 / CIP 110805 / LMG 28347 / Deep ecotype).